The sequence spans 346 residues: MKKTAIAIAVALAGFATVAQAAPKDNTWYTGAKLGWSQYHDTGFINNNGPTHENQLGAGAFGGYQVNPYVGFEMGYDWLGRMPYKGSVENGAYKAQGVQLTAKLGYPITDDLDIYTRLGGMVWRADTKSNVYGKNHDTGVSPVFAGGVEYAITPEIATRLEYQWTNNIGDAHTIGTRPDNGMLSLGVSYRFGQGEAAPVVAPAPAPAPEVQTKHFTLKSDVLFNFNKATLKPEGQAALDQLYSQLSNLDPKDGSVVVLGYTDRIGSDAYNQGLSERRAQSVVDYLISKGIPADKISARGMGESNPVTGNTCDNVKQRAALIDCLAPDRRVEIEVKGIKDVVTQPQA.

The signal sequence occupies residues 1 to 21 (MKKTAIAIAVALAGFATVAQA). The next 8 beta stranded transmembrane spans lie at 27–37 (TWYTGAKLGWS), 55–66 (QLGAGAFGGYQV), 70–78 (VGFEMGYDW), 96–107 (QGVQLTAKLGYP), 112–120 (LDIYTRLGG), 142–151 (PVFAGGVEYA), 156–163 (IATRLEYQ), and 182–190 (MLSLGVSYR). Positions 197–208 (APVVAPAPAPAP) are hinge-like. 4 repeat units span residues 201–202 (AP), 203–204 (AP), 205–206 (AP), and 207–208 (AP). Residues 201-208 (APAPAPAP) form a 4 X 2 AA tandem repeats of A-P region. Positions 210 to 338 (VQTKHFTLKS…RVEIEVKGIK (129 aa)) constitute an OmpA-like domain. A disulfide bridge connects residues Cys-311 and Cys-323.

The protein belongs to the outer membrane OOP (TC 1.B.6) superfamily. OmpA family. In terms of assembly, monomer and homodimer.

The protein resides in the cell outer membrane. Functionally, with TolR probably plays a role in maintaining the position of the peptidoglycan cell wall in the periplasm. Acts as a porin with low permeability that allows slow penetration of small solutes; an internal gate slows down solute passage. In terms of biological role, required for conjugation with F-type plasmids; probably serves as the mating receptor on recipient cells. The protein is Outer membrane protein A of Escherichia coli O157:H7.